Reading from the N-terminus, the 389-residue chain is Chromobox protein homolog 8 (389 aa).

Positions 11 to 69 (FAAEALLKRRIRKGRMEYLVKWKGWSQKYSTWEPEENILDARLLAAFEEREREMELYGP) constitute a Chromo domain. A phosphoserine mark is found at Ser110 and Ser130. Residues 124–241 (LRNMGLSPPA…DDTPSGAGKF (118 aa)) are disordered. A compositionally biased stretch (basic and acidic residues) spans 145–189 (EAPRDRDRDRDRDRERDRERERERERERERERERERGTSRVDDKP). Phosphoserine occurs at positions 191, 256, 265, 311, 332, and 352. The interval 298 to 327 (GALDPNGTRVRHGSGPPSSGGGLYRDMGAQ) is disordered.

In terms of assembly, component of a PRC1-like complex. Interacts with RING1 RNF2, PCGF1, PCGF2, PCGF3, BMI1, PCGF5 and PCGF6. Interacts with MLLT3 and histone H3. Interacts with PHC2.

It localises to the nucleus. In terms of biological role, component of a Polycomb group (PcG) multiprotein PRC1-like complex, a complex class required to maintain the transcriptionally repressive state of many genes, including Hox genes, throughout development. PcG PRC1 complex acts via chromatin remodeling and modification of histones; it mediates monoubiquitination of histone H2A 'Lys-119', rendering chromatin heritably changed in its expressibility. The chain is Chromobox protein homolog 8 (CBX8) from Homo sapiens (Human).